Reading from the N-terminus, the 329-residue chain is 2-oxoglutarate-dependent dioxygenase mpl2 (329 aa).

One can recognise a Fe2OG dioxygenase domain in the interval 183-288 (PACPLRLLHY…RYSVVFFFDG (106 aa)). His-211, Asp-213, and His-269 together coordinate Fe cation. 2-oxoglutarate is bound at residue Arg-279.

It belongs to the iron/ascorbate-dependent oxidoreductase family. Fe(2+) serves as cofactor.

Its pathway is mycotoxin biosynthesis. 2-oxoglutarate-dependent dioxygenase; part of the gene cluster that mediates the biosynthesis of the mycotoxin citrinin, a hepato-nephrotoxic compound to humans due to inhibition of respiration complex III. The pathway begins with the synthesis of a keto-aldehyde intermediate by the citrinin PKS (pksCT) from successive condensations of 4 malonyl-CoA units, presumably with a simple acetyl-CoA starter unit. Release of the keto-aldehyde intermediate is consistent with the presence of the C-terminal reductive release domain. Mp11 collaborates with pksCT by catalyzing the hydrolysis of ACP-bound acyl intermediates to free the ACP from stalled intermediates. Mpl2 then catalyzes the oxidation of the C-12 methyl of the ketone intermediate to an alcohol intermediate which is further oxidized by the oxidoreductase mpl7 to produce a bisaldehyde intermediate. The fourth catalytic step is catalyzed by the mpl4 aldehyde dehydrogenase. The final transformation is the reduction of C-3 by mpl6 to provide the chemically stable citrinin nucleus. The polypeptide is 2-oxoglutarate-dependent dioxygenase mpl2 (Monascus purpureus (Red mold)).